Consider the following 197-residue polypeptide: Peptidoglycan-recognition protein 1 (197 aa).

A signal peptide spans 1 to 23 (MKLATITFFLLTEIFFYISYAEA). Cystine bridges form between Cys-31–Cys-154 and Cys-68–Cys-74. The 128-residue stretch at 53–180 (KPLERVVIHH…RNVKATKSPG (128 aa)) folds into the N-acetylmuramoyl-L-alanine amidase domain.

It belongs to the N-acetylmuramoyl-L-alanine amidase 2 family. As to expression, localizes to plasma (at protein level).

The protein localises to the secreted. Its function is as follows. Peptidoglycan-recognition protein probably involved in innate immunity by binding to peptidoglycans (PGN) of bacteria and activating the prophenoloxidase (proPO) cascade immune response. Binds to 1,3-beta-D-glucan and PGN. This chain is Peptidoglycan-recognition protein 1 (PGRP-1), found in Holotrichia diomphalia (Korean black chafer).